The primary structure comprises 1416 residues: Nucleoporin NUP170 (1416 aa).

Disordered stretches follow at residues 1–26 (MEPM…ANPA) and 50–69 (APLA…LMTP).

This sequence belongs to the non-repetitive/WGA-negative nucleoporin family. In terms of assembly, component of the nuclear pore complex (NPC). NPC constitutes the exclusive means of nucleocytoplasmic transport. NPCs allow the passive diffusion of ions and small molecules and the active, nuclear transport receptor-mediated bidirectional transport of macromolecules such as proteins, RNAs, ribonucleoparticles (RNPs), and ribosomal subunits across the nuclear envelope. Due to its 8-fold rotational symmetry, all subunits are present with 8 copies or multiples thereof. Part of a tetrameric NUP192-NUP170-NIC96-NUP53 or NUP188-NUP170-NIC96-NUP53 module.

The protein localises to the nucleus. Its subcellular location is the nuclear pore complex. It is found in the nucleus membrane. Functions as a component of the nuclear pore complex (NPC). NPC components, collectively referred to as nucleoporins (NUPs), can play the role of both NPC structural components and of docking or interaction partners for transiently associated nuclear transport factors. NUP170 probably plays an important role in NPC assembly and organization. The polypeptide is Nucleoporin NUP170 (NUP170) (Chaetomium thermophilum (strain DSM 1495 / CBS 144.50 / IMI 039719) (Thermochaetoides thermophila)).